The chain runs to 844 residues: Protein translocase subunit SecA 1 (844 aa).

Residues Q91, 109–113 (GEGKT), and D498 contribute to the ATP site. The segment covering 793–813 (KSKSFGEAKHVTAEDGKEKAK) has biased composition (basic and acidic residues). Positions 793-825 (KSKSFGEAKHVTAEDGKEKAKPQPIVKGDQVGR) are disordered. Zn(2+)-binding residues include C829, C831, C840, and H841.

It belongs to the SecA family. In terms of assembly, monomer and homodimer. Part of the essential Sec protein translocation apparatus which comprises SecA, SecYEG and auxiliary proteins SecDF. Other proteins may also be involved. Zn(2+) is required as a cofactor.

Its subcellular location is the cell membrane. The protein localises to the cytoplasm. It catalyses the reaction ATP + H2O + cellular proteinSide 1 = ADP + phosphate + cellular proteinSide 2.. Its function is as follows. Part of the Sec protein translocase complex. Interacts with the SecYEG preprotein conducting channel. Has a central role in coupling the hydrolysis of ATP to the transfer of proteins into and across the cell membrane, serving as an ATP-driven molecular motor driving the stepwise translocation of polypeptide chains across the membrane. The chain is Protein translocase subunit SecA 1 from Staphylococcus epidermidis (strain ATCC 35984 / DSM 28319 / BCRC 17069 / CCUG 31568 / BM 3577 / RP62A).